Here is a 466-residue protein sequence, read N- to C-terminus: Asparagine--tRNA ligase (466 aa).

Belongs to the class-II aminoacyl-tRNA synthetase family. As to quaternary structure, homodimer.

It is found in the cytoplasm. The catalysed reaction is tRNA(Asn) + L-asparagine + ATP = L-asparaginyl-tRNA(Asn) + AMP + diphosphate + H(+). The chain is Asparagine--tRNA ligase from Wigglesworthia glossinidia brevipalpis.